The sequence spans 976 residues: Receptor-like protein 14 (976 aa).

A signal peptide spans 1 to 26; the sequence is MERKVFSGQNLIWVMLLLVQLRGYKC. Over 27-928 the chain is Extracellular; sequence CIEKERKALL…DDDDEAAIDM (902 aa). Residues Asn-60, Asn-75, Asn-98, Asn-112, Asn-151, Asn-185, and Asn-200 are each glycosylated (N-linked (GlcNAc...) asparagine). LRR repeat units lie at residues 105–127, 137–160, 162–185, 186–209, 210–233, 234–258, 260–283, 284–306, 308–331, 333–358, 359–381, 382–405, 407–428, 429–452, 454–477, 478–501, and 503–528; these read FEEL…LFDD, LRNL…FLNA, TSLT…ELKN, LTKL…FTHL, EKLK…ELKV, LTNL…VFCE, KNLR…LGNL, NKLR…SFNS, ESLE…PLAN, TKLK…WLPK, FQLT…LVYQ, TNLR…LLEN, PELK…PTIV, HKLQ…IGHV, PRLL…MGEM, NDIS…LLTG, and FSLI…RLTS. N-linked (GlcNAc...) asparagine glycosylation is present at Asn-331. Asn-416 carries an N-linked (GlcNAc...) asparagine glycan. N-linked (GlcNAc...) asparagine glycosylation is found at Asn-460 and Asn-489. The LRR 18; degenerate repeat unit spans residues 530–549; the sequence is IVLRMHNNLFTGEIGVGLRT. 11 LRR repeats span residues 550–573, 575–599, 600–623, 625–645, 646–669, 671–692, 693–715, 782–805, 806–829, 831–854, and 856–879; these read LVNL…SIPP, SSHL…LLAI, HHLN…VVNS, YGIK…VTLL, ENAY…VNTG, MITL…LCDL, TSIR…CLNH, LDYM…ELGD, LSKL…NFSK, KDIE…LTNL, and SLAV…QFNT. An N-linked (GlcNAc...) asparagine glycan is attached at Asn-552. Asn-633 carries an N-linked (GlcNAc...) asparagine glycan. An N-linked (GlcNAc...) asparagine glycan is attached at Asn-680. Residues Asn-813, Asn-826, Asn-853, Asn-861, and Asn-866 are each glycosylated (N-linked (GlcNAc...) asparagine). Residues 897 to 922 are disordered; that stretch reads DRSCEGKKNTKEADNGGEEEEEDDDD. The segment covering 898–910 has biased composition (basic and acidic residues); sequence RSCEGKKNTKEAD. Over residues 911–922 the composition is skewed to acidic residues; that stretch reads NGGEEEEEDDDD. Residues 929–949 form a helical membrane-spanning segment; it reads VVLYWTTGSTYAIALIGILVL. Topologically, residues 950-976 are cytoplasmic; that stretch reads MCFDCPWRRTWLCIVDAFIASGKSMFS.

The protein belongs to the RLP family.

The protein resides in the cell membrane. The protein is Receptor-like protein 14 of Arabidopsis thaliana (Mouse-ear cress).